The sequence spans 735 residues: DNA replication licensing factor mcm5-A (735 aa).

In terms of domain architecture, MCM spans 332-538 (IYETVAKSIA…RDMTLAKHVM (207 aa)). R372 is an ADP binding site. An Arginine finger motif is present at residues 513–516 (SRFD).

Belongs to the MCM family. In terms of assembly, component of the mcm2-7 complex (RLF-M). The complex forms a toroidal hexameric ring with the proposed subunit order mcm2-mcm6-mcm4-mcm7-mcm3-mcm5. The heterodimer of mmcm3/mcm5 interacts with mcm4, mmcm6, mcm7 and weakly with mcm2. Component of the CMG helicase complex, composed of the mcm2-7 complex, the GINS complex and cdc45.

Its subcellular location is the nucleus. It is found in the chromosome. The catalysed reaction is ATP + H2O = ADP + phosphate + H(+). In terms of biological role, acts as a component of the MCM2-7 complex (MCM complex) which is the replicative helicase essential for 'once per cell cycle' DNA replication initiation and elongation in eukaryotic cells. Core component of CDC45-MCM-GINS (CMG) helicase, the molecular machine that unwinds template DNA during replication, and around which the replisome is built. The active ATPase sites in the MCM2-7 ring are formed through the interaction surfaces of two neighboring subunits such that a critical structure of a conserved arginine finger motif is provided in trans relative to the ATP-binding site of the Walker A box of the adjacent subunit. The six ATPase active sites, however, are likely to contribute differentially to the complex helicase activity. The chain is DNA replication licensing factor mcm5-A (mcm5-a) from Xenopus laevis (African clawed frog).